The chain runs to 150 residues: Ribosome-binding factor A (150 aa).

Residues 126–150 are disordered; that stretch reads EVARDLSHDDDEDGGADEAPRNGDE.

Belongs to the RbfA family. As to quaternary structure, monomer. Binds 30S ribosomal subunits, but not 50S ribosomal subunits or 70S ribosomes.

It localises to the cytoplasm. Its function is as follows. One of several proteins that assist in the late maturation steps of the functional core of the 30S ribosomal subunit. Associates with free 30S ribosomal subunits (but not with 30S subunits that are part of 70S ribosomes or polysomes). Required for efficient processing of 16S rRNA. May interact with the 5'-terminal helix region of 16S rRNA. This Brucella abortus (strain S19) protein is Ribosome-binding factor A.